A 243-amino-acid chain; its full sequence is Outer membrane protein A (243 aa).

5 beta stranded membrane passes run 1 to 8 (LTAKLGYP), 13 to 21 (LDIYTRLGG), 48 to 57 (PVFAGGVEWA), 62 to 69 (IATRLEYQ), and 88 to 96 (LLSLGVSYR). 4 consecutive repeat copies span residues 107–108 (AP), 109–110 (AP), 111–112 (AP), and 113–114 (AP). Residues 107-114 (APAPAPAP) are 4 X 2 AA tandem repeats of A-P. The region spanning 116–243 (VQTKHFTLKS…RRVEIEVKGI (128 aa)) is the OmpA-like domain. C217 and C229 form a disulfide bridge.

It belongs to the outer membrane OOP (TC 1.B.6) superfamily. OmpA family. As to quaternary structure, monomer and homodimer.

The protein localises to the cell outer membrane. Functionally, with TolR probably plays a role in maintaining the position of the peptidoglycan cell wall in the periplasm. Acts as a porin with low permeability that allows slow penetration of small solutes; an internal gate slows down solute passage. Its function is as follows. Required for conjugation with F-type plasmids; probably serves as the mating receptor on recipient cells. This is Outer membrane protein A from Escherichia fergusonii.